The sequence spans 352 residues: Probable dual-specificity RNA methyltransferase RlmN (352 aa).

Residue E99 is the Proton acceptor of the active site. Residues 105-339 (TKSRTTACVS…VTVRRSRGKD (235 aa)) enclose the Radical SAM core domain. A disulfide bond links C112 and C344. Positions 119, 123, and 126 each coordinate [4Fe-4S] cluster. Residues 170–171 (GE), S202, 225–227 (SLH), and N301 each bind S-adenosyl-L-methionine. Residue C344 is the S-methylcysteine intermediate of the active site.

It belongs to the radical SAM superfamily. RlmN family. It depends on [4Fe-4S] cluster as a cofactor.

The protein localises to the cytoplasm. It carries out the reaction adenosine(2503) in 23S rRNA + 2 reduced [2Fe-2S]-[ferredoxin] + 2 S-adenosyl-L-methionine = 2-methyladenosine(2503) in 23S rRNA + 5'-deoxyadenosine + L-methionine + 2 oxidized [2Fe-2S]-[ferredoxin] + S-adenosyl-L-homocysteine. The enzyme catalyses adenosine(37) in tRNA + 2 reduced [2Fe-2S]-[ferredoxin] + 2 S-adenosyl-L-methionine = 2-methyladenosine(37) in tRNA + 5'-deoxyadenosine + L-methionine + 2 oxidized [2Fe-2S]-[ferredoxin] + S-adenosyl-L-homocysteine. Specifically methylates position 2 of adenine 2503 in 23S rRNA and position 2 of adenine 37 in tRNAs. This is Probable dual-specificity RNA methyltransferase RlmN from Christiangramia forsetii (strain DSM 17595 / CGMCC 1.15422 / KT0803) (Gramella forsetii).